The sequence spans 541 residues: GMP synthase [glutamine-hydrolyzing] (541 aa).

The region spanning 15 to 209 (TILTLDFGSQ…AVNICGCKQN (195 aa)) is the Glutamine amidotransferase type-1 domain. Cys-91 (nucleophile) is an active-site residue. Catalysis depends on residues His-183 and Glu-185. A GMPS ATP-PPase domain is found at 210-416 (WTMARFVDQE…LGIAHEMVMR (207 aa)). 238-244 (SGGVDST) lines the ATP pocket. Positions 311, 478, 533, and 539 each coordinate XMP.

As to quaternary structure, homodimer. Mg(2+) serves as cofactor.

The protein resides in the cytoplasm. It localises to the cytosol. The catalysed reaction is XMP + L-glutamine + ATP + H2O = GMP + L-glutamate + AMP + diphosphate + 2 H(+). It functions in the pathway purine metabolism; GMP biosynthesis; GMP from XMP (L-Gln route): step 1/1. Functionally, catalyzes the conversion of xanthine monophosphate (XMP) to GMP in the presence of glutamine and ATP through an adenyl-XMP intermediate. This chain is GMP synthase [glutamine-hydrolyzing] (gua1), found in Aspergillus oryzae (strain ATCC 42149 / RIB 40) (Yellow koji mold).